The primary structure comprises 138 residues: Small ribosomal subunit protein uS11c (138 aa).

Residues 1-21 (MAKSISKIGSRKNARIGSRKQ) form a disordered region. The span at 9–21 (GSRKNARIGSRKQ) shows a compositional bias: basic residues.

This sequence belongs to the universal ribosomal protein uS11 family. As to quaternary structure, part of the 30S ribosomal subunit.

The protein resides in the plastid. It is found in the chloroplast. This is Small ribosomal subunit protein uS11c from Cicer arietinum (Chickpea).